A 269-amino-acid chain; its full sequence is Diaminopimelate epimerase (269 aa).

Asn13, Gln46, and Asn65 together coordinate substrate. The active-site Proton donor is Cys74. Substrate contacts are provided by residues 75–76, Asn149, Asn182, and 200–201; these read GN and ER. The active-site Proton acceptor is Cys209. A substrate-binding site is contributed by 210–211; that stretch reads GT.

Belongs to the diaminopimelate epimerase family. Homodimer.

The protein resides in the cytoplasm. The catalysed reaction is (2S,6S)-2,6-diaminopimelate = meso-2,6-diaminopimelate. It functions in the pathway amino-acid biosynthesis; L-lysine biosynthesis via DAP pathway; DL-2,6-diaminopimelate from LL-2,6-diaminopimelate: step 1/1. Functionally, catalyzes the stereoinversion of LL-2,6-diaminopimelate (L,L-DAP) to meso-diaminopimelate (meso-DAP), a precursor of L-lysine and an essential component of the bacterial peptidoglycan. The chain is Diaminopimelate epimerase from Zymomonas mobilis subsp. mobilis (strain ATCC 31821 / ZM4 / CP4).